Here is an 852-residue protein sequence, read N- to C-terminus: Protein SBE22 (852 aa).

The interval 1-158 (MTSIQERGTS…ADKSKINTFP (158 aa)) is disordered. The segment covering 15–26 (SLKEGEASDRSS) has biased composition (basic and acidic residues). Residues 43–61 (PPSQTTLGRSRAGSNTMNK) show a composition bias toward polar residues. S72 is subject to Phosphoserine. The segment covering 74 to 96 (NLLSNMNCSDNGNGGNMLNSFVN) has biased composition (polar residues). Residues 124–139 (TTEVFSSTSASSSLGD) show a composition bias toward low complexity. At S201 the chain carries Phosphoserine. The disordered stretch occupies residues 206 to 248 (AAEKTMNKSRHSYQEQFSSKKSQSSLLNSKQRSRAKSQTCSST). Residues 224–235 (SKKSQSSLLNSK) are compositionally biased toward low complexity. Phosphoserine occurs at positions 459, 517, and 520.

The protein belongs to the SBE2 family.

It is found in the cytoplasm. Its subcellular location is the golgi apparatus. Its function is as follows. With SBE2, is involved in cell wall integrity and polarity processes like bud growth, through the transport of CHS3 and UTR2 to sites of growth. This chain is Protein SBE22 (SBE22), found in Saccharomyces cerevisiae (strain YJM789) (Baker's yeast).